The following is a 573-amino-acid chain: Membrane protein insertase YidC (573 aa).

The next 6 helical transmembrane spans lie at 6-26, 355-375, 379-399, 446-466, 488-508, and 524-544; these read VFLI…WGKD, FSIM…LHSF, WGWA…PLSA, GGCL…WVLV, PYFI…KLTP, and PLVF…YWVV.

Belongs to the OXA1/ALB3/YidC family. Type 1 subfamily. Interacts with the Sec translocase complex via SecD. Specifically interacts with transmembrane segments of nascent integral membrane proteins during membrane integration.

Its subcellular location is the cell inner membrane. Its function is as follows. Required for the insertion and/or proper folding and/or complex formation of integral membrane proteins into the membrane. Involved in integration of membrane proteins that insert both dependently and independently of the Sec translocase complex, as well as at least some lipoproteins. Aids folding of multispanning membrane proteins. This Xanthomonas campestris pv. campestris (strain ATCC 33913 / DSM 3586 / NCPPB 528 / LMG 568 / P 25) protein is Membrane protein insertase YidC.